A 59-amino-acid chain; its full sequence is MRNAVKLLELSLIDDHFLRYRPSDAAQNHRINNSTKFIFSFFMFNKQNFWQLFSFCINI.

This is an uncharacterized protein from Caenorhabditis elegans.